Here is a 353-residue protein sequence, read N- to C-terminus: Peroxidase C1A (353 aa).

An N-terminal signal peptide occupies residues 1-30 (MHFSSSSTLFTCITLIPLVCLILHASLSDA). Pyrrolidone carboxylic acid is present on Gln31. Intrachain disulfides connect Cys41/Cys121, Cys74/Cys79, Cys127/Cys331, and Cys207/Cys239. Asn43 carries N-linked (GlcNAc...) asparagine glycosylation. Residue His72 is the Proton acceptor of the active site. Residues Asp73, Val76, Gly78, Asp80, and Ser82 each contribute to the Ca(2+) site. An N-linked (GlcNAc...) asparagine glycan is attached at Asn87. Glu94 contacts Ca(2+). Substrate is bound at residue Pro169. Asn188 is a glycosylation site (N-linked (GlcNAc...) asparagine). A heme b-binding site is contributed by His200. Thr201 is a binding site for Ca(2+). Residues Asn216, Asn228, and Asn244 are each glycosylated (N-linked (GlcNAc...) asparagine). Residues Asp252, Thr255, and Asp260 each contribute to the Ca(2+) site. 2 N-linked (GlcNAc...) asparagine glycosylation sites follow: Asn285 and Asn298. A propeptide spanning residues 339–353 (LLHDMVEVVDFVSSM) is cleaved from the precursor.

Belongs to the peroxidase family. Classical plant (class III) peroxidase subfamily. In terms of assembly, monomer. The cofactor is Ca(2+). Heme b is required as a cofactor.

Its subcellular location is the secreted. The protein localises to the vacuole. It catalyses the reaction 2 a phenolic donor + H2O2 = 2 a phenolic radical donor + 2 H2O. Functionally, removal of H(2)O(2), oxidation of toxic reductants, biosynthesis and degradation of lignin, suberization, auxin catabolism, response to environmental stresses such as wounding, pathogen attack and oxidative stress. These functions might be dependent on each isozyme/isoform in each plant tissue. The polypeptide is Peroxidase C1A (PRXC1A) (Armoracia rusticana (Horseradish)).